Here is a 247-residue protein sequence, read N- to C-terminus: UPF0246 protein LSEI_2080 (247 aa).

The protein belongs to the UPF0246 family.

This is UPF0246 protein LSEI_2080 from Lacticaseibacillus paracasei (strain ATCC 334 / BCRC 17002 / CCUG 31169 / CIP 107868 / KCTC 3260 / NRRL B-441) (Lactobacillus paracasei).